Consider the following 292-residue polypeptide: Xyloglucan endotransglucosylase/hydrolase protein A (292 aa).

An N-terminal signal peptide occupies residues 1-20; sequence MGSSLWTCLILLSLASASFA. One can recognise a GH16 domain in the interval 21-219; it reads ANPRTPIDVP…WSKAPFIASY (199 aa). The active-site Nucleophile is the E105. E109 (proton donor) is an active-site residue. E109 provides a ligand contact to xyloglucan. A glycan (N-linked (GlcNAc...) asparagine) is linked at N113. Residues 122–124, 132–134, 198–199, and G203 contribute to the xyloglucan site; these read QTN, DRE, and DW. Cystine bridges form between C227/C236 and C273/C286. R278 lines the xyloglucan pocket.

Belongs to the glycosyl hydrolase 16 family. XTH group 1 subfamily. Post-translationally, contains at least one intrachain disulfide bond essential for its enzymatic activity. Predominantly expressed in the phloem fibers of growing internodes. Expressed in xylem cells in the basal part of the internode. In the internode, it is expressed closer to the top of the internode compared to XTHB.

It is found in the secreted. The protein localises to the cell wall. The protein resides in the extracellular space. Its subcellular location is the apoplast. It carries out the reaction breaks a beta-(1-&gt;4) bond in the backbone of a xyloglucan and transfers the xyloglucanyl segment on to O-4 of the non-reducing terminal glucose residue of an acceptor, which can be a xyloglucan or an oligosaccharide of xyloglucan.. In terms of biological role, catalyzes xyloglucan endohydrolysis (XEH) and/or endotransglycosylation (XET). Cleaves and religates xyloglucan polymers, an essential constituent of the primary cell wall, and thereby participates in cell wall construction of growing tissues. The polypeptide is Xyloglucan endotransglucosylase/hydrolase protein A (XTHA) (Phaseolus angularis (Azuki bean)).